We begin with the raw amino-acid sequence, 204 residues long: Putative copper-binding protein (204 aa).

Cu cation contacts are provided by cysteine 77, cysteine 81, and histidine 166.

The protein belongs to the SCO1/2 family.

This Stutzerimonas stutzeri (Pseudomonas stutzeri) protein is Putative copper-binding protein (scoP).